A 349-amino-acid polypeptide reads, in one-letter code: 2-oxoglutarate and iron-dependent oxygenase domain-containing protein 2 (349 aa).

In terms of domain architecture, Fe2OG dioxygenase spans 211–305; the sequence is DSHRAFVVKY…RWNLILWMRA (95 aa). The Fe cation site is built by histidine 231, aspartate 233, and histidine 286. Arginine 296 contributes to the 2-oxoglutarate binding site.

The protein belongs to the OGFOD2 family. The cofactor is Fe(2+). L-ascorbate serves as cofactor.

In Xenopus tropicalis (Western clawed frog), this protein is 2-oxoglutarate and iron-dependent oxygenase domain-containing protein 2 (ogfod2).